The sequence spans 216 residues: Superoxide dismutase [Cu-Zn], chloroplastic (216 aa).

The N-terminal 62 residues, 1 to 62 (MACHSALAAV…ASPRSMVVVA (62 aa)), are a transit peptide targeting the chloroplast. Residues H108, H110, and H125 each coordinate Cu cation. A disulfide bond links C119 and C208. 4 residues coordinate Zn(2+): H125, H133, H142, and D145. H182 contacts Cu cation.

The protein belongs to the Cu-Zn superoxide dismutase family. As to quaternary structure, homotetramer. Requires Cu cation as cofactor. The cofactor is Zn(2+).

It is found in the plastid. It localises to the chloroplast. It carries out the reaction 2 superoxide + 2 H(+) = H2O2 + O2. In terms of biological role, destroys radicals which are normally produced within the cells and which are toxic to biological systems. The protein is Superoxide dismutase [Cu-Zn], chloroplastic (SODCP) of Zantedeschia aethiopica (White calla lily).